Reading from the N-terminus, the 225-residue chain is NAD(P)H-quinone oxidoreductase subunit K, chloroplastic (225 aa).

The [4Fe-4S] cluster site is built by Cys-43, Cys-44, Cys-108, and Cys-139.

It belongs to the complex I 20 kDa subunit family. In terms of assembly, NDH is composed of at least 16 different subunits, 5 of which are encoded in the nucleus. [4Fe-4S] cluster is required as a cofactor.

It is found in the plastid. The protein localises to the chloroplast thylakoid membrane. The enzyme catalyses a plastoquinone + NADH + (n+1) H(+)(in) = a plastoquinol + NAD(+) + n H(+)(out). It catalyses the reaction a plastoquinone + NADPH + (n+1) H(+)(in) = a plastoquinol + NADP(+) + n H(+)(out). Its function is as follows. NDH shuttles electrons from NAD(P)H:plastoquinone, via FMN and iron-sulfur (Fe-S) centers, to quinones in the photosynthetic chain and possibly in a chloroplast respiratory chain. The immediate electron acceptor for the enzyme in this species is believed to be plastoquinone. Couples the redox reaction to proton translocation, and thus conserves the redox energy in a proton gradient. This is NAD(P)H-quinone oxidoreductase subunit K, chloroplastic from Fagopyrum esculentum subsp. ancestrale (Wild buckwheat).